A 481-amino-acid polypeptide reads, in one-letter code: Cytochrome c oxidase subunit 1 (481 aa).

The helical transmembrane segment at 22-42 (ISYLWLAYWFGMIGFYMSVLI) threads the bilayer. The Ca(2+) site is built by Glu-45 and Gly-50. 8 consecutive transmembrane segments (helical) span residues 64-84 (LLFT…GLFG), 109-129 (SLLF…LEIG), 151-171 (FIIF…VNFI), 194-214 (IVLT…VFLM), 240-260 (LFWF…FGII), 278-298 (MILA…TSYV), 309-329 (YFTT…FNWV), and 343-363 (LVLF…TGVV). His-69 is a Fe(II)-heme a binding site. His-246 provides a ligand contact to Cu cation. Positions 246-250 (HPEVY) form a cross-link, 1'-histidyl-3'-tyrosine (His-Tyr). Position 250 (Tyr-250) interacts with O2. Residues His-374 and Asp-375 each contribute to the Mg(2+) site. His-382 is a binding site for heme a3. The next 2 helical transmembrane spans lie at 382–402 (HFHF…IIYI) and 420–440 (IAPI…FTGF). His-384 lines the Fe(II)-heme a pocket. Pro-448 provides a ligand contact to Ca(2+). The chain crosses the membrane as a helical span at residues 459–479 (FICTLGATMMLVLKLAILFII).

This sequence belongs to the heme-copper respiratory oxidase family. As to quaternary structure, component of the cytochrome c oxidase (complex IV, CIV), a multisubunit enzyme composed of a catalytic core of 3 subunits and several supernumerary subunits. The complex exists as a monomer or a dimer and forms supercomplexes (SCs) in the inner mitochondrial membrane with ubiquinol-cytochrome c oxidoreductase (cytochrome b-c1 complex, complex III, CIII). It depends on heme as a cofactor. The cofactor is Cu cation.

It localises to the mitochondrion inner membrane. It carries out the reaction 4 Fe(II)-[cytochrome c] + O2 + 8 H(+)(in) = 4 Fe(III)-[cytochrome c] + 2 H2O + 4 H(+)(out). It functions in the pathway energy metabolism; oxidative phosphorylation. Its function is as follows. Component of the cytochrome c oxidase, the last enzyme in the mitochondrial electron transport chain which drives oxidative phosphorylation. The respiratory chain contains 3 multisubunit complexes succinate dehydrogenase (complex II, CII), ubiquinol-cytochrome c oxidoreductase (cytochrome b-c1 complex, complex III, CIII) and cytochrome c oxidase (complex IV, CIV), that cooperate to transfer electrons derived from NADH and succinate to molecular oxygen, creating an electrochemical gradient over the inner membrane that drives transmembrane transport and the ATP synthase. Cytochrome c oxidase is the component of the respiratory chain that catalyzes the reduction of oxygen to water. Electrons originating from reduced cytochrome c in the intermembrane space (IMS) are transferred via the dinuclear copper A center (CU(A)) of subunit 2 and heme A of subunit 1 to the active site in subunit 1, a binuclear center (BNC) formed by heme A3 and copper B (CU(B)). The BNC reduces molecular oxygen to 2 water molecules using 4 electrons from cytochrome c in the IMS and 4 protons from the mitochondrial matrix. This Theileria parva (East coast fever infection agent) protein is Cytochrome c oxidase subunit 1 (MT-CO1).